A 453-amino-acid polypeptide reads, in one-letter code: Bifunctional protein GlmU (453 aa).

Residues 1–226 form a pyrophosphorylase region; that stretch reads MKFSAVILAA…PIEVEGVNDR (226 aa). Residues 8–11, Lys22, Gln73, 78–79, 100–102, Gly137, Glu151, Asn166, and Asn224 contribute to the UDP-N-acetyl-alpha-D-glucosamine site; these read LAAG, GT, and YGD. Asp102 serves as a coordination point for Mg(2+). Asn224 is a Mg(2+) binding site. The tract at residues 227–247 is linker; that stretch reads AQLARLERAFQAAQAKKLLEQ. The interval 248–453 is N-acetyltransferase; the sequence is GVMLRDPARF…TGWQRPVKKK (206 aa). Residues Arg330 and Lys348 each contribute to the UDP-N-acetyl-alpha-D-glucosamine site. The active-site Proton acceptor is the His360. Residues Tyr363 and Asn374 each contribute to the UDP-N-acetyl-alpha-D-glucosamine site. Acetyl-CoA contacts are provided by residues Ala377, 383-384, Ser402, Ala420, and Arg437; that span reads NY.

It in the N-terminal section; belongs to the N-acetylglucosamine-1-phosphate uridyltransferase family. In the C-terminal section; belongs to the transferase hexapeptide repeat family. In terms of assembly, homotrimer. Requires Mg(2+) as cofactor.

Its subcellular location is the cytoplasm. The enzyme catalyses alpha-D-glucosamine 1-phosphate + acetyl-CoA = N-acetyl-alpha-D-glucosamine 1-phosphate + CoA + H(+). It carries out the reaction N-acetyl-alpha-D-glucosamine 1-phosphate + UTP + H(+) = UDP-N-acetyl-alpha-D-glucosamine + diphosphate. Its pathway is nucleotide-sugar biosynthesis; UDP-N-acetyl-alpha-D-glucosamine biosynthesis; N-acetyl-alpha-D-glucosamine 1-phosphate from alpha-D-glucosamine 6-phosphate (route II): step 2/2. It functions in the pathway nucleotide-sugar biosynthesis; UDP-N-acetyl-alpha-D-glucosamine biosynthesis; UDP-N-acetyl-alpha-D-glucosamine from N-acetyl-alpha-D-glucosamine 1-phosphate: step 1/1. It participates in bacterial outer membrane biogenesis; LPS lipid A biosynthesis. Functionally, catalyzes the last two sequential reactions in the de novo biosynthetic pathway for UDP-N-acetylglucosamine (UDP-GlcNAc). The C-terminal domain catalyzes the transfer of acetyl group from acetyl coenzyme A to glucosamine-1-phosphate (GlcN-1-P) to produce N-acetylglucosamine-1-phosphate (GlcNAc-1-P), which is converted into UDP-GlcNAc by the transfer of uridine 5-monophosphate (from uridine 5-triphosphate), a reaction catalyzed by the N-terminal domain. In Vibrio vulnificus (strain CMCP6), this protein is Bifunctional protein GlmU.